A 310-amino-acid polypeptide reads, in one-letter code: Olfactory receptor 2A7 (310 aa).

At methionine 1–methionine 24 the chain is on the extracellular side. Asparagine 4 carries N-linked (GlcNAc...) asparagine glycosylation. Residues leucine 25 to isoleucine 48 traverse the membrane as a helical segment. Over serine 49–alanine 56 the chain is Cytoplasmic. The chain crosses the membrane as a helical span at residues proline 57–proline 78. Over arginine 79–glutamine 99 the chain is Extracellular. Residues threonine 100–tyrosine 119 traverse the membrane as a helical segment. Residues aspartate 120–arginine 138 lie on the Cytoplasmic side of the membrane. Residues valine 139 to isoleucine 157 form a helical membrane-spanning segment. Residues histidine 158–asparagine 194 are Extracellular-facing. The helical transmembrane segment at glutamate 195–methionine 218 threads the bilayer. Residues cysteine 219–lysine 235 lie on the Cytoplasmic side of the membrane. Residues alanine 236–tyrosine 258 traverse the membrane as a helical segment. Over valine 259 to lysine 271 the chain is Extracellular. The helical transmembrane segment at tyrosine 272–leucine 291 threads the bilayer. At arginine 292–leucine 310 the chain is on the cytoplasmic side.

It belongs to the G-protein coupled receptor 1 family.

The protein resides in the cell membrane. Functionally, odorant receptor. The polypeptide is Olfactory receptor 2A7 (OR2A7) (Homo sapiens (Human)).